Here is a 238-residue protein sequence, read N- to C-terminus: Pre-protein VI (238 aa).

A propeptide spanning residues 1–33 (MDAVNFSILAPRYGSHPMMSAWSGIGTSDMNGG) is cleaved from the precursor. The interval 34-54 (AFNWGGIWSGIKNFGSNVKNW) is amphipathic alpha-helix essential for membrane lytic activity. Positions 36–53 (NWGGIWSGIKNFGSNVKN) are involved in endosomal membrane lysis. An interaction with hexon protein region spans residues 48 to 74 (GSNVKNWGSRAWNSQTGKLLRQKLNDT). The Nuclear export signal signature appears at 67-76 (LRQKLNDTKV). Residues 153-156 (PPSY) carry the PPXY motif motif. A disordered region spans residues 187–212 (TLELKPSDQPPPYSPQSSNMPVTAPV). The short motif at 219–230 (GTLANIVGVGLS) is the Nuclear export signal element. An interaction with hexon protein region spans residues 221 to 227 (LANIVGV). The interval 228–238 (GLSNVKRRRCF) is binds to importin alpha/beta, involved in hexon nuclear import. The Nuclear localization signal signature appears at 233-236 (KRRR).

Belongs to the adenoviridae protein VI family. As to quaternary structure, interacts with hexon protein; this interaction allows nuclear import of hexon trimers and possibly pre-capsid assembly. Interacts (via C-terminal NLS) with importin alpha/beta. Interacts (via PPxY motif) with host NEDD4 ubiquitine ligase; this interaction might play a role in virus intracellular transport during entry. Part of a complex composed of the core-capsid bridging protein, the endosome lysis protein VI and the hexon-linking protein VIII; these interactions bridge the virus core to the capsid. Interacts with peripentonal hexons; this interaction stabilizes the capsid by gluing two peripentonal hexons together and joining them with an adjacent group-of-nine hexon. In terms of assembly, heterodimer with the viral protease; disulfide-linked. Interacts with the viral protease. Ubiquitinated by Nedd4 following partial capsid disassembly; which might play a role in intracellular virus movement during entry. Post-translationally, contains the major nuclear import and export signals. Proteolytically removed during virion maturation. The processing of the C-terminus turns the precursor into a mature viral structural protein and abrogates its ability to promote hexon import and act as a potential chaperone protein.

It is found in the host nucleus. The protein resides in the host cytoplasm. The protein localises to the virion. During virus assembly, promotes hexon trimers nuclear import through nuclear pore complexes via an importin alpha/beta-dependent mechanism. By analogy to herpesviruses capsid assembly, might act as a chaperone to promote the formation of the icosahedral capsid. Functionally, structural component of the virion that provides increased stability to the particle shell through its interaction with the core-capsid bridging protein and the hexon-linking protein VIII. Fibers shedding during virus entry into host cell allows the endosome lysis protein to be exposed as a membrane-lytic peptide. Exhibits pH-independent membrane fragmentation activity and probably mediates viral rapid escape from host endosome via organellar membrane lysis. It is not clear if it then remains partially associated with the capsid and involved in the intracellular microtubule-dependent transport of capsid to the nucleus, or if it is lost during endosomal penetration. Its function is as follows. Cofactor that activates the viral protease. Binds to viral protease in a 1:1 ratio. This chain is Pre-protein VI, found in Canine adenovirus serotype 1 (strain CLL) (CAdV-1).